Here is a 376-residue protein sequence, read N- to C-terminus: MAGTDREKALDAALAQIERQFGKGAVMRMGERSKEPIEVIPTASTALDVALGVGGIPRGRVVEIYGPESSGKTTLTLHAVANAQKAGGSVAFIDAEHALDPEYAKKLGVDTDALILSQPDNGEQALEIVDMLVRSGALDLIVIDSVAALVPRAEIEGEMGDSHVGLQARLMSQALRKITSALNQSKTTAIFINQLREKIGVMFGSPETTTGGRALKFYASVRIDIRRIETLKDGTEAVGNRTRCKVVKNKVAPPFKQAEFDILYGQGISREGGLIDMGVEHGFIRKSGAWYTYEGDQLGQGKENARNFLKDNPDLANEVEKKIKEKLGVGVKPEDLTAEPGADAAGAAADAEAPAKSVPAPAAKSAKGSKAAAAKS.

Residue 66-73 participates in ATP binding; that stretch reads GPESSGKT. Positions 329–376 are disordered; it reads VGVKPEDLTAEPGADAAGAAADAEAPAKSVPAPAAKSAKGSKAAAAKS. The span at 338–376 shows a compositional bias: low complexity; the sequence is AEPGADAAGAAADAEAPAKSVPAPAAKSAKGSKAAAAKS.

This sequence belongs to the RecA family.

Its subcellular location is the cytoplasm. Can catalyze the hydrolysis of ATP in the presence of single-stranded DNA, the ATP-dependent uptake of single-stranded DNA by duplex DNA, and the ATP-dependent hybridization of homologous single-stranded DNAs. It interacts with LexA causing its activation and leading to its autocatalytic cleavage. The polypeptide is Protein RecA (Streptomyces rimosus).